We begin with the raw amino-acid sequence, 275 residues long: 4-hydroxy-tetrahydrodipicolinate reductase (275 aa).

NAD(+) contacts are provided by residues 13–18 (GAAGKM), 108–110 (GTT), and 134–137 (APNF). H164 acts as the Proton donor/acceptor in catalysis. H165 is a (S)-2,3,4,5-tetrahydrodipicolinate binding site. K168 (proton donor) is an active-site residue. (S)-2,3,4,5-tetrahydrodipicolinate is bound at residue 174-175 (GT).

Belongs to the DapB family.

The protein localises to the cytoplasm. The enzyme catalyses (S)-2,3,4,5-tetrahydrodipicolinate + NAD(+) + H2O = (2S,4S)-4-hydroxy-2,3,4,5-tetrahydrodipicolinate + NADH + H(+). The catalysed reaction is (S)-2,3,4,5-tetrahydrodipicolinate + NADP(+) + H2O = (2S,4S)-4-hydroxy-2,3,4,5-tetrahydrodipicolinate + NADPH + H(+). It functions in the pathway amino-acid biosynthesis; L-lysine biosynthesis via DAP pathway; (S)-tetrahydrodipicolinate from L-aspartate: step 4/4. Functionally, catalyzes the conversion of 4-hydroxy-tetrahydrodipicolinate (HTPA) to tetrahydrodipicolinate. In Synechocystis sp. (strain ATCC 27184 / PCC 6803 / Kazusa), this protein is 4-hydroxy-tetrahydrodipicolinate reductase.